Reading from the N-terminus, the 453-residue chain is uncharacterized protein (453 aa).

One can recognise a TRAM domain in the interval Leu5 to Asn63. [4Fe-4S] cluster contacts are provided by Cys76, Cys82, Cys85, and Cys162. The S-adenosyl-L-methionine site is built by Gln285, Tyr314, Glu335, and Asp383. The active-site Nucleophile is the Cys410.

This sequence belongs to the class I-like SAM-binding methyltransferase superfamily. RNA M5U methyltransferase family.

This is an uncharacterized protein from Listeria innocua serovar 6a (strain ATCC BAA-680 / CLIP 11262).